Reading from the N-terminus, the 108-residue chain is Iron-sulfur cluster assembly protein CyaY (108 aa).

It belongs to the frataxin family.

Its function is as follows. Involved in iron-sulfur (Fe-S) cluster assembly. May act as a regulator of Fe-S biogenesis. The sequence is that of Iron-sulfur cluster assembly protein CyaY from Burkholderia vietnamiensis (strain G4 / LMG 22486) (Burkholderia cepacia (strain R1808)).